Here is a 264-residue protein sequence, read N- to C-terminus: Glutamate racemase (264 aa).

Substrate is bound by residues 10-11 (DS) and 42-43 (YG). The active-site Proton donor/acceptor is the C73. 74-75 (NT) contributes to the substrate binding site. The Proton donor/acceptor role is filled by C183. Residue 184 to 185 (TH) participates in substrate binding.

Belongs to the aspartate/glutamate racemases family.

The catalysed reaction is L-glutamate = D-glutamate. The protein operates within cell wall biogenesis; peptidoglycan biosynthesis. Its function is as follows. Provides the (R)-glutamate required for cell wall biosynthesis. The sequence is that of Glutamate racemase from Streptococcus pneumoniae (strain ATCC BAA-255 / R6).